A 710-amino-acid chain; its full sequence is MSALSVIEQRLLKWDKLASLVPKSKKTPFPIDRLNELLKVCANSSYLRIGESIHAHLIVTNQSSRAEDAYQINSLINLYVKCRETVRARKLFDLMPERNVVSWCAMMKGYQNSGFDFEVLKLFKSMFFSGESRPNEFVATVVFKSCSNSGRIEEGKQFHGCFLKYGLISHEFVRNTLVYMYSLCSGNGEAIRVLDDLPYCDLSVFSSALSGYLECGAFKEGLDVLRKTANEDFVWNNLTYLSSLRLFSNLRDLNLALQVHSRMVRFGFNAEVEACGALINMYGKCGKVLYAQRVFDDTHAQNIFLNTTIMDAYFQDKSFEEALNLFSKMDTKEVPPNEYTFAILLNSIAELSLLKQGDLLHGLVLKSGYRNHVMVGNALVNMYAKSGSIEDARKAFSGMTFRDIVTWNTMISGCSHHGLGREALEAFDRMIFTGEIPNRITFIGVLQACSHIGFVEQGLHYFNQLMKKFDVQPDIQHYTCIVGLLSKAGMFKDAEDFMRTAPIEWDVVAWRTLLNACYVRRNYRLGKKVAEYAIEKYPNDSGVYVLLSNIHAKSREWEGVAKVRSLMNNRGVKKEPGVSWIGIRNQTHVFLAEDNQHPEITLIYAKVKEVMSKIKPLGYSPDVAGAFHDVDEEQREDNLSYHSEKLAVAYGLIKTPEKSPLYVTKNVRICDDCHSAIKLISKISKRYIVIRDSNRFHHFLDGQCSCCDYW.

S2 is subject to N-acetylserine. PPR repeat units follow at residues 35–64, 68–98, 99–133, 135–169, 170–200, 201–235, 236–270, 271–301, 302–336, 337–371, 372–402, 403–437, 438–473, and 474–504; these read NELL…NQSS, DAYQ…MPER, NVVS…GESR, NEFV…GLIS, HEFV…LPYC, DLSV…DFVW, NNLT…GFNA, EVEA…THAQ, NIFL…EVPP, NEYT…GYRN, HVMV…MTFR, DIVT…GEIP, NRIT…DVQP, and DIQH…APIE. The interval 509 to 584 is type E motif; sequence AWRTLLNACY…EPGVSWIGIR (76 aa). The tract at residues 585-615 is type E(+) motif; the sequence is NQTHVFLAEDNQHPEITLIYAKVKEVMSKIK. Residues 616–710 form a type DYW motif region; sequence PLGYSPDVAG…DGQCSCCDYW (95 aa).

Belongs to the PPR family. PCMP-H subfamily.

This is Pentatricopeptide repeat-containing protein At5g39680 (EMB2744) from Arabidopsis thaliana (Mouse-ear cress).